We begin with the raw amino-acid sequence, 241 residues long: Leucyl/phenylalanyl-tRNA--protein transferase (241 aa).

The protein belongs to the L/F-transferase family.

The protein resides in the cytoplasm. It catalyses the reaction N-terminal L-lysyl-[protein] + L-leucyl-tRNA(Leu) = N-terminal L-leucyl-L-lysyl-[protein] + tRNA(Leu) + H(+). It carries out the reaction N-terminal L-arginyl-[protein] + L-leucyl-tRNA(Leu) = N-terminal L-leucyl-L-arginyl-[protein] + tRNA(Leu) + H(+). The catalysed reaction is L-phenylalanyl-tRNA(Phe) + an N-terminal L-alpha-aminoacyl-[protein] = an N-terminal L-phenylalanyl-L-alpha-aminoacyl-[protein] + tRNA(Phe). Its function is as follows. Functions in the N-end rule pathway of protein degradation where it conjugates Leu, Phe and, less efficiently, Met from aminoacyl-tRNAs to the N-termini of proteins containing an N-terminal arginine or lysine. This Neisseria meningitidis serogroup C (strain 053442) protein is Leucyl/phenylalanyl-tRNA--protein transferase.